A 212-amino-acid chain; its full sequence is Thiamine-phosphate synthase (212 aa).

Residues 35–39 (QLRRK) and N67 each bind 4-amino-2-methyl-5-(diphosphooxymethyl)pyrimidine. Residues D68 and D87 each coordinate Mg(2+). Position 106 (S106) interacts with 4-amino-2-methyl-5-(diphosphooxymethyl)pyrimidine. Residue 132–134 (TGS) participates in 2-[(2R,5Z)-2-carboxy-4-methylthiazol-5(2H)-ylidene]ethyl phosphate binding. K135 contributes to the 4-amino-2-methyl-5-(diphosphooxymethyl)pyrimidine binding site. Residues G163 and 183 to 184 (IS) contribute to the 2-[(2R,5Z)-2-carboxy-4-methylthiazol-5(2H)-ylidene]ethyl phosphate site.

It belongs to the thiamine-phosphate synthase family. The cofactor is Mg(2+).

The catalysed reaction is 2-[(2R,5Z)-2-carboxy-4-methylthiazol-5(2H)-ylidene]ethyl phosphate + 4-amino-2-methyl-5-(diphosphooxymethyl)pyrimidine + 2 H(+) = thiamine phosphate + CO2 + diphosphate. It catalyses the reaction 2-(2-carboxy-4-methylthiazol-5-yl)ethyl phosphate + 4-amino-2-methyl-5-(diphosphooxymethyl)pyrimidine + 2 H(+) = thiamine phosphate + CO2 + diphosphate. It carries out the reaction 4-methyl-5-(2-phosphooxyethyl)-thiazole + 4-amino-2-methyl-5-(diphosphooxymethyl)pyrimidine + H(+) = thiamine phosphate + diphosphate. The protein operates within cofactor biosynthesis; thiamine diphosphate biosynthesis; thiamine phosphate from 4-amino-2-methyl-5-diphosphomethylpyrimidine and 4-methyl-5-(2-phosphoethyl)-thiazole: step 1/1. Its function is as follows. Condenses 4-methyl-5-(beta-hydroxyethyl)thiazole monophosphate (THZ-P) and 2-methyl-4-amino-5-hydroxymethyl pyrimidine pyrophosphate (HMP-PP) to form thiamine monophosphate (TMP). The protein is Thiamine-phosphate synthase of Chlorobium luteolum (strain DSM 273 / BCRC 81028 / 2530) (Pelodictyon luteolum).